The following is a 336-amino-acid chain: Ketol-acid reductoisomerase (NADP(+)) (336 aa).

Positions 1-182 (MAVIYYDKDA…GVTRAGVIET (182 aa)) constitute a KARI N-terminal Rossmann domain. NADP(+) contacts are provided by residues 25 to 28 (YGSQ), R48, S51, S53, and 83 to 86 (DENQ). The active site involves H108. G134 serves as a coordination point for NADP(+). In terms of domain architecture, KARI C-terminal knotted spans 183–328 (TFKEETETDL…KELRKMMPWL (146 aa)). Mg(2+) is bound by residues D191, E195, E227, and E231. Position 252 (S252) interacts with substrate.

Belongs to the ketol-acid reductoisomerase family. The cofactor is Mg(2+).

The enzyme catalyses (2R)-2,3-dihydroxy-3-methylbutanoate + NADP(+) = (2S)-2-acetolactate + NADPH + H(+). It catalyses the reaction (2R,3R)-2,3-dihydroxy-3-methylpentanoate + NADP(+) = (S)-2-ethyl-2-hydroxy-3-oxobutanoate + NADPH + H(+). Its pathway is amino-acid biosynthesis; L-isoleucine biosynthesis; L-isoleucine from 2-oxobutanoate: step 2/4. The protein operates within amino-acid biosynthesis; L-valine biosynthesis; L-valine from pyruvate: step 2/4. In terms of biological role, involved in the biosynthesis of branched-chain amino acids (BCAA). Catalyzes an alkyl-migration followed by a ketol-acid reduction of (S)-2-acetolactate (S2AL) to yield (R)-2,3-dihydroxy-isovalerate. In the isomerase reaction, S2AL is rearranged via a Mg-dependent methyl migration to produce 3-hydroxy-3-methyl-2-ketobutyrate (HMKB). In the reductase reaction, this 2-ketoacid undergoes a metal-dependent reduction by NADPH to yield (R)-2,3-dihydroxy-isovalerate. This Thermotoga petrophila (strain ATCC BAA-488 / DSM 13995 / JCM 10881 / RKU-1) protein is Ketol-acid reductoisomerase (NADP(+)).